A 202-amino-acid polypeptide reads, in one-letter code: Nucleoside triphosphate pyrophosphatase (202 aa).

Asp-79 functions as the Proton acceptor in the catalytic mechanism.

The protein belongs to the Maf family. Requires a divalent metal cation as cofactor.

The protein resides in the cytoplasm. It catalyses the reaction a ribonucleoside 5'-triphosphate + H2O = a ribonucleoside 5'-phosphate + diphosphate + H(+). It carries out the reaction a 2'-deoxyribonucleoside 5'-triphosphate + H2O = a 2'-deoxyribonucleoside 5'-phosphate + diphosphate + H(+). Its function is as follows. Nucleoside triphosphate pyrophosphatase. May have a dual role in cell division arrest and in preventing the incorporation of modified nucleotides into cellular nucleic acids. The protein is Nucleoside triphosphate pyrophosphatase of Nitrobacter hamburgensis (strain DSM 10229 / NCIMB 13809 / X14).